The primary structure comprises 810 residues: DNA ligase (810 aa).

Residues 46 to 50 (DAEYD), 95 to 96 (SL), and glutamate 129 contribute to the NAD(+) site. Lysine 131 serves as the catalytic N6-AMP-lysine intermediate. NAD(+) is bound by residues arginine 152, glutamate 189, lysine 305, and lysine 329. Zn(2+) contacts are provided by cysteine 434, cysteine 437, cysteine 458, and cysteine 464. Residues 528–548 (ERRAESGTAEPPKKAAKKKGD) are disordered. The 80-residue stretch at 731–810 (AAASTFAGKT…DDWLAMVAQG (80 aa)) folds into the BRCT domain.

The protein belongs to the NAD-dependent DNA ligase family. LigA subfamily. Mg(2+) serves as cofactor. Requires Mn(2+) as cofactor.

It carries out the reaction NAD(+) + (deoxyribonucleotide)n-3'-hydroxyl + 5'-phospho-(deoxyribonucleotide)m = (deoxyribonucleotide)n+m + AMP + beta-nicotinamide D-nucleotide.. In terms of biological role, DNA ligase that catalyzes the formation of phosphodiester linkages between 5'-phosphoryl and 3'-hydroxyl groups in double-stranded DNA using NAD as a coenzyme and as the energy source for the reaction. It is essential for DNA replication and repair of damaged DNA. The chain is DNA ligase from Methylobacterium radiotolerans (strain ATCC 27329 / DSM 1819 / JCM 2831 / NBRC 15690 / NCIMB 10815 / 0-1).